A 396-amino-acid polypeptide reads, in one-letter code: MRKLNPYFGEFGGQYVPEILIPALDQLEQAFIDAQNDPSFQQEFQDLLKNYAGRPTALTLCRNLTQGTRTRLYLKREDLLHGGAHKTNQVLGQALLAKRMGKTEIIAETGAGQHGVATALACALLNMKCRIYMGAKDVERQSPNVFRMRLMGAEVIPVHSGSSTLKDACNEALRDWSGCYERAHYLLGTAAGPHPYPTIVREFQRMIGDEAKAQILAREGRLPDAVIACIGGGSNAIGLFASFIPETSVQLIGVEPAGKGIETGEHGAPLKHGKLGIYFGMKSPIMQTEEGQIEESYSISAGLDFPSVGPQHAHLNSIGRADYVSVTDDEAIEAFKTLSRREGIIPALESSHALAYALKLIAQNPDKEQLLIVNLSGRGDKDIFTVNDILAARGEI.

Lys-86 carries the N6-(pyridoxal phosphate)lysine modification.

The protein belongs to the TrpB family. In terms of assembly, tetramer of two alpha and two beta chains. It depends on pyridoxal 5'-phosphate as a cofactor.

It carries out the reaction (1S,2R)-1-C-(indol-3-yl)glycerol 3-phosphate + L-serine = D-glyceraldehyde 3-phosphate + L-tryptophan + H2O. Its pathway is amino-acid biosynthesis; L-tryptophan biosynthesis; L-tryptophan from chorismate: step 5/5. In terms of biological role, the beta subunit is responsible for the synthesis of L-tryptophan from indole and L-serine. The sequence is that of Tryptophan synthase beta chain from Proteus mirabilis (strain HI4320).